A 116-amino-acid polypeptide reads, in one-letter code: Phosphoribosyl-AMP cyclohydrolase (116 aa).

Asp85 is a binding site for Mg(2+). Cys86 lines the Zn(2+) pocket. Positions 87 and 89 each coordinate Mg(2+). The Zn(2+) site is built by Cys102 and Cys109.

The protein belongs to the PRA-CH family. Homodimer. Mg(2+) serves as cofactor. The cofactor is Zn(2+).

The protein localises to the cytoplasm. It carries out the reaction 1-(5-phospho-beta-D-ribosyl)-5'-AMP + H2O = 1-(5-phospho-beta-D-ribosyl)-5-[(5-phospho-beta-D-ribosylamino)methylideneamino]imidazole-4-carboxamide. The protein operates within amino-acid biosynthesis; L-histidine biosynthesis; L-histidine from 5-phospho-alpha-D-ribose 1-diphosphate: step 3/9. In terms of biological role, catalyzes the hydrolysis of the adenine ring of phosphoribosyl-AMP. This chain is Phosphoribosyl-AMP cyclohydrolase, found in Thermobifida fusca (strain YX).